A 980-amino-acid polypeptide reads, in one-letter code: MTMITPSSKLTLTKGNKSWSSTRCGAFLLLHLVLQPWQRAGAQATPQVFDLLPSSSQRLNPAALQPVLTDPTLHELYVISTFKLQSKSSATIFGLYSSSDNSKYFEFTVMGRLNKAILRYLKDDGKIHLVVFNNLQLADGRRHRILLRLSNLQRGAGSVELYLDCVQVDSVNNLPRAFSGLTQNPQAIELRTFQRKPQDFLEELKLVVRGSLFQVASLQDCFLQQSEPLAATGTGDFNRQFLGQMTQLNQLLGEVKDLLRQQVKETSFLRNTIAECQACGPLSFQSPTPNTLVPIAPPAPPTRPTRRCDSSPCFRGVRCTDTRDGFQCGPCPDGYTGNGITCSDVDECKYHPCYPGVRCTNLAPGFRCDACPVGFTGPMVQGVGINFAKTNKQVCTDVDECRNGACVLNSICINTLGSYRCGPCKPGYTGDQTRGCRTERSCRNPEQNPCSVHAQCIEERQGDVTCVCGVGWAGRAGYVCGKDVDIDSYPDEELPCSARNCKKDNCKYVPNSGQEDADRDGIGDACDEDADGDGILNEQDNCVLTHNVDQRNTDKDIFGDACDNCRGVLNNDQKDTDGDGKGDACDDDMDGDGIKNILDNCPRVPNRDQQDRDGDGVGDACDSCPDVSNPNQSDVDNDLVGDSCDTNQDSDGDGHQDSTDNCPTVINSAQLDTDKDGIGDECDDDDDNDGMPDLFPPGPDNCRLVPNPAQEDSNNDGVGDICEADFDQDKVIDRIDVCPENAEITLTDFRAYQTVVLDPEGDAQIDPNWVVLNQGMEIVQTMNSDPGLAVGYTAFNGVDFEGTFHVNTQTDDDYAGFIFGYQDSSSFYVVMWKQTEQTYWQATPFRAVAEPGIQLKAVKSKTGPGEHLRNSLWHTGDTSDQVRLLWKDSRNVGWKDKVSYRWFLQHRPQVGYIRVRFYEGSELVADSGVTIDTTMRGGRLGVFCFSQENIIWSNLKYRCNDTIPEDFQEFQIQTFDRLDN.

Positions 1–42 (MTMITPSSKLTLTKGNKSWSSTRCGAFLLLHLVLQPWQRAGA) are cleaved as a signal peptide. The Laminin G-like domain occupies 43-210 (QATPQVFDLL…LEELKLVVRG (168 aa)). The EGF-like 1 domain maps to 304–343 (PTRRCDSSPCFRGVRCTDTRDGFQCGPCPDGYTGNGITCS). 21 cysteine pairs are disulfide-bonded: cysteine 308/cysteine 319, cysteine 313/cysteine 328, cysteine 331/cysteine 342, cysteine 348/cysteine 359, cysteine 353/cysteine 368, cysteine 371/cysteine 395, cysteine 401/cysteine 412, cysteine 406/cysteine 421, cysteine 424/cysteine 436, cysteine 442/cysteine 456, cysteine 450/cysteine 466, cysteine 468/cysteine 480, cysteine 496/cysteine 501, cysteine 506/cysteine 526, cysteine 542/cysteine 562, cysteine 565/cysteine 585, cysteine 601/cysteine 621, cysteine 624/cysteine 644, cysteine 662/cysteine 682, cysteine 702/cysteine 722, and cysteine 738/cysteine 959. The 38-residue stretch at 344–381 (DVDECKYHPCYPGVRCTNLAPGFRCDACPVGFTGPMVQ) folds into the EGF-like 2; calcium-binding domain. An EGF-like 3; calcium-binding domain is found at 397–434 (DVDECRNGACVLNSICINTLGSYRCGPCKPGYTGDQTR). One can recognise an EGF-like 4 domain in the interval 438–481 (TERSCRNPEQNPCSVHAQCIEERQGDVTCVCGVGWAGRAGYVCG). TSP type-3 repeat units lie at residues 482 to 514 (KDVD…NSGQ), 515 to 550 (EDAD…NVDQ), 551 to 573 (RNTD…NNDQ), 574 to 609 (KDTD…NRDQ), 610 to 632 (QDRD…NPNQ), 633 to 670 (SDVD…NSAQ), 671 to 710 (LDTD…NPAQ), and 711 to 746 (EDSN…EITL). A disordered region spans residues 596 to 691 (NILDNCPRVP…CDDDDDNDGM (96 aa)). Residues 605-615 (PNRDQQDRDGD) are compositionally biased toward basic and acidic residues. A glycan (N-linked (GlcNAc...) asparagine) is linked at asparagine 631. The span at 659–671 (TDNCPTVINSAQL) shows a compositional bias: polar residues. Positions 679–690 (GDECDDDDDNDG) are enriched in acidic residues. In terms of domain architecture, TSP C-terminal spans 750 to 964 (RAYQTVVLDP…LKYRCNDTIP (215 aa)). Asparagine 960 carries N-linked (GlcNAc...) asparagine glycosylation.

It belongs to the thrombospondin family. In terms of assembly, homopentamer; disulfide-linked. Interacts with PTBP3. Interacts (via EGF-like 3; calcium-binding domain) with ATF6 and facilitates its processing, activation and nuclear translocation. Interacts with NOTCH1. As to expression, mainly expressed in astrocytes, and in ressponse to peripheral nerve injury, significantly up-regulated in the dorsal spinal cord (at protein level).

Its subcellular location is the endoplasmic reticulum. The protein resides in the sarcoplasmic reticulum. It is found in the secreted. The protein localises to the extracellular space. It localises to the extracellular matrix. Its function is as follows. Adhesive glycoprotein that mediates cell-to-cell and cell-to-matrix interactions and is involved in various processes including cellular proliferation, migration, adhesion and attachment, inflammatory response to CNS injury, regulation of vascular inflammation and adaptive responses of the heart to pressure overload and in myocardial function and remodeling. Binds to structural extracellular matrix (ECM) proteins and modulates the ECM in response to tissue damage, contributing to cardioprotective and adaptive ECM remodeling. Plays a role in ER stress response, via its interaction with the activating transcription factor 6 alpha (ATF6) which produces adaptive ER stress response factors and protects myocardium from pressure overload. May contribute to spinal presynaptic hypersensitivity and neuropathic pain states after peripheral nerve injury. May play a role in regulating protective astrogenesis from the subventricular zone (SVZ) niche after injury in a NOTCH1-dependent manner. This Rattus norvegicus (Rat) protein is Thrombospondin-4 (Thbs4).